A 263-amino-acid chain; its full sequence is Receptor-transporting protein 1 (263 aa).

Topologically, residues 1–238 (MRIFRPWRLR…ETGSGCNFCS (238 aa)) are cytoplasmic. The 3CxxC-type zinc finger occupies 88 to 197 (ASGRFHCSWC…GEFCEACQEG (110 aa)). Residues 239–259 (IPWCLFWATVLMLIIYLQFSF) traverse the membrane as a helical segment. Residues 260–263 (RTSV) are Extracellular-facing.

The protein belongs to the TMEM7 family. In terms of assembly, interacts with olfactory receptors. As to expression, predominantly expressed in olfactory and vomeronasal organs, in mature olfactory sensory neurons.

Its subcellular location is the cell membrane. In terms of biological role, specifically promotes functional cell surface expression of olfactory receptors, but not of other GPCRs. The protein is Receptor-transporting protein 1 (Rtp1) of Mus musculus (Mouse).